Consider the following 352-residue polypeptide: Phosphate acyltransferase (352 aa).

Belongs to the PlsX family. As to quaternary structure, homodimer. Probably interacts with PlsY.

It is found in the cytoplasm. The enzyme catalyses a fatty acyl-[ACP] + phosphate = an acyl phosphate + holo-[ACP]. Its pathway is lipid metabolism; phospholipid metabolism. In terms of biological role, catalyzes the reversible formation of acyl-phosphate (acyl-PO(4)) from acyl-[acyl-carrier-protein] (acyl-ACP). This enzyme utilizes acyl-ACP as fatty acyl donor, but not acyl-CoA. This Brucella anthropi (strain ATCC 49188 / DSM 6882 / CCUG 24695 / JCM 21032 / LMG 3331 / NBRC 15819 / NCTC 12168 / Alc 37) (Ochrobactrum anthropi) protein is Phosphate acyltransferase.